We begin with the raw amino-acid sequence, 601 residues long: Zinc finger protein 37 (601 aa).

The KRAB domain occupies 1 to 70 (MATPEPAESD…VRANKNSSSS (70 aa)). Thr-3 bears the Phosphothreonine mark. Ser-9 carries the post-translational modification Phosphoserine. A compositionally biased stretch (polar residues) spans 30–43 (ETCSNPASMGNQDP). The segment at 30 to 254 (ETCSNPASMG…SKSDKAPGSG (225 aa)) is disordered. The span at 60–70 (SVRANKNSSSS) shows a compositional bias: low complexity. Residues 77–88 (TGTSAKVQQDGA) show a composition bias toward polar residues. 3 stretches are compositionally biased toward basic and acidic residues: residues 115–136 (KSSECTLLEKKNVHSKHDPSEK), 164–174 (KKPDTANEYRK), and 183–238 (VNRD…EKRK). The C2H2-type 1 zinc-finger motif lies at 257 to 279 (YECNQCGKVLSHKQGLLDHQRTH). The C2H2-type 2; atypical zinc finger occupies 285 to 303 (YECYECGIAFSQKSHLVVH). 10 consecutive C2H2-type zinc fingers follow at residues 314–337 (YECVQCGKAHGHKHALTDHLRISH), 343–365 (YKCNECGKTFRHSSNLMQHIRSH), 371–393 (YECKECGKSFRYNSSFTEHVRTH), 399–421 (YECNECGKAFKYGSSLTKHMRIH), 427–449 (FECTECGKTFSKKSHLVIHQRTH), 455–477 (YKCKECGKAFGHSSSLTYHMRTH), 483–505 (FECNKCGKAFKQIEGLTQHQRVH), 511–533 (YECVECGKAFSQKSHLIVHQRTH), 539–561 (FECYECGKAFNAKSQLVIHQRSH), and 570–592 (YECVECGKAFKQNASLTRHMKTH).

The protein belongs to the krueppel C2H2-type zinc-finger protein family. Expressed in testes, brain, kidney, spleen, thymus, lung, and at low levels in liver.

The protein localises to the nucleus. In terms of biological role, may be involved in transcriptional regulation. The sequence is that of Zinc finger protein 37 (Zfp37) from Rattus norvegicus (Rat).